Here is a 125-residue protein sequence, read N- to C-terminus: Holo-[acyl-carrier-protein] synthase (125 aa).

Asp-8 and Glu-57 together coordinate Mg(2+).

This sequence belongs to the P-Pant transferase superfamily. AcpS family. The cofactor is Mg(2+).

It is found in the cytoplasm. The enzyme catalyses apo-[ACP] + CoA = holo-[ACP] + adenosine 3',5'-bisphosphate + H(+). In terms of biological role, transfers the 4'-phosphopantetheine moiety from coenzyme A to a Ser of acyl-carrier-protein. The sequence is that of Holo-[acyl-carrier-protein] synthase from Azoarcus sp. (strain BH72).